A 197-amino-acid polypeptide reads, in one-letter code: Transcription factor FapR (197 aa).

The protein belongs to the FapR family.

In terms of biological role, transcriptional factor involved in regulation of membrane lipid biosynthesis by repressing genes involved in fatty acid and phospholipid metabolism. The chain is Transcription factor FapR from Bacillus cereus (strain B4264).